Consider the following 40-residue polypeptide: Sulfur globule protein TR0 (40 aa).

To C.vinosum CV1 and CV2. In terms of assembly, the protein envelope of the sulfur globules is composed of the three different proteins TR0, TR1 and TR2.

Its function is as follows. Structural protein of the sulfur globules, which are intracellular globules that serve for sulfur storage in purple sulfur bacteria. This chain is Sulfur globule protein TR0, found in Thiocapsa roseopersicina.